Here is a 248-residue protein sequence, read N- to C-terminus: 3-deoxy-manno-octulosonate cytidylyltransferase (248 aa).

It belongs to the KdsB family.

It localises to the cytoplasm. The catalysed reaction is 3-deoxy-alpha-D-manno-oct-2-ulosonate + CTP = CMP-3-deoxy-beta-D-manno-octulosonate + diphosphate. The protein operates within nucleotide-sugar biosynthesis; CMP-3-deoxy-D-manno-octulosonate biosynthesis; CMP-3-deoxy-D-manno-octulosonate from 3-deoxy-D-manno-octulosonate and CTP: step 1/1. It participates in bacterial outer membrane biogenesis; lipopolysaccharide biosynthesis. Functionally, activates KDO (a required 8-carbon sugar) for incorporation into bacterial lipopolysaccharide in Gram-negative bacteria. The chain is 3-deoxy-manno-octulosonate cytidylyltransferase from Escherichia coli O6:H1 (strain CFT073 / ATCC 700928 / UPEC).